The primary structure comprises 845 residues: Protein arginine N-methyltransferase 9 (845 aa).

3 TPR repeats span residues 25-58, 67-100, and 101-134; these read VSRSLQSAEHCLGVQDFGTAYAHYLLVLSLAPEL, QYTLFRWAEELDALSRIQDLLGCYEQALELFPDD, and EVICNSMGEHLFRMGFRDEAAGYFHKAVKLNPDF. 2 consecutive SAM-dependent MTase PRMT-type domains span residues 137–466 and 530–845; these read AKEN…YLRI and NIPY…TVKQ.

Belongs to the class I-like SAM-binding methyltransferase superfamily. Protein arginine N-methyltransferase family. As to quaternary structure, found in a complex with PRMT9, SF3B2 and SF3B4. Interacts with SF3B2.

The protein localises to the cytoplasm. The catalysed reaction is L-arginyl-[protein] + 2 S-adenosyl-L-methionine = N(omega),N(omega)'-dimethyl-L-arginyl-[protein] + 2 S-adenosyl-L-homocysteine + 2 H(+). Functionally, arginine methyltransferase that can both catalyze the formation of omega-N monomethylarginine (MMA) and symmetrical dimethylarginine (sDMA). Specifically mediates the symmetrical dimethylation of SF3B2. Involved in the regulation of alternative splicing of pre-mRNA. The polypeptide is Protein arginine N-methyltransferase 9 (Homo sapiens (Human)).